The chain runs to 691 residues: MALLLTLTSPDLEGTWDTRDKDGFKAQEGPPLAVPEFPVCGLYRIYGVCGSFSSFFIIRCSLCALETLKSPQHDPLEIPEQSLKLIPLVSGKRELTRGQKAGEKPLAAGPGEEELLRGSAPHAQDTQSEELPPSCTISGEKKPPAVSGEATGADAGRLCPPPRSRAPHKDRTLARSRPQTQGEDCSLPVGEVKIGKRSYSPAPGKQKKPNAMGLAPTSSPGAPNSARATHNPVPCGSGRGPCHLANLLSTLAQSNQNRDHKQGPPEVTCQIRKKTRTLYRSDQLEELEKIFQEDHYPDSDKRREIAQTVGVTPQRIMVKGAGSLVAGWSGGGPTIETLELQSERSAVAWVWFQNRRAKWRKMEKLNGKESKDNPAAPGPASSQCSSAAEILPAVPMEPKPDPFPQESPLDTFPEPPMLLTSDQTLAPTQPSEGAQRVVTPPLFSPPPVRRADLPFPLGPVHTPQLMPLLMDVAGSDSSHKDGPCGSWGTSITLPPPCSYLEELEPQDYQQSNQPGPFQFSQAPQPPLFQSPQPKLPYLPTFPFSMPSSLTLPPPEDSLFMFPCGPSGGTSQGYCPGASSGQILMQPPAGNIGTASWSDPCLPELPFPGPFCPQALGHPPGGDGYFPDLFPTPCPQALGRQPSSALSWMPEGARPGTGPLLSKAKEEPPAASLDQPSALEEARGDDKNSHVP.

Basic and acidic residues predominate over residues 94-103 (ELTRGQKAGE). The segment at 94–233 (ELTRGQKAGE…NSARATHNPV (140 aa)) is disordered. Residues 216-228 (PTSSPGAPNSARA) are compositionally biased toward polar residues. Positions 272–363 (RKKTRTLYRS…NRRAKWRKME (92 aa)) form a DNA-binding region, homeobox. 3 disordered regions span residues 366-385 (NGKE…SQCS), 394-437 (VPME…AQRV), and 635-691 (QALG…SHVP). The span at 395-405 (PMEPKPDPFPQ) shows a compositional bias: pro residues. Polar residues predominate over residues 420-432 (TSDQTLAPTQPSE). The segment covering 679–691 (EEARGDDKNSHVP) has biased composition (basic and acidic residues).

As to expression, expressed in ovaries, testes and pancreas. Expressed within all stages of the adult female germline, from primordial follicles through to MII oocytes.

It is found in the nucleus. In terms of biological role, transcription factor which may play a role in oogenesis. Binds preferentially to the DNA sequences 5'-TAATTG-3', 5'-TAGTTG-3' and 5'-TAATTA-3'. The protein is Homeobox protein NOBOX (NOBOX) of Homo sapiens (Human).